We begin with the raw amino-acid sequence, 135 residues long: UPF0299 membrane protein ECA2828 (135 aa).

Transmembrane regions (helical) follow at residues Phe5 to Gly25, Ala30 to Leu50, Gly63 to Met83, and Phe93 to Phe113.

Belongs to the UPF0299 family.

Its subcellular location is the cell inner membrane. This Pectobacterium atrosepticum (strain SCRI 1043 / ATCC BAA-672) (Erwinia carotovora subsp. atroseptica) protein is UPF0299 membrane protein ECA2828.